Reading from the N-terminus, the 435-residue chain is Tryptophan--tRNA ligase (435 aa).

Residues Thr-10–Ser-12 and Gly-18–Asn-19 each bind ATP. The 'HIGH' region signature appears at Thr-11–Asn-19. Asp-143 lines the L-tryptophan pocket. ATP contacts are provided by residues Gly-155–Asp-157, Leu-195, and Lys-202–Ser-206. Positions Lys-202–Ser-206 match the 'KMSKS' region motif.

It belongs to the class-I aminoacyl-tRNA synthetase family. As to quaternary structure, homodimer.

It localises to the cytoplasm. It carries out the reaction tRNA(Trp) + L-tryptophan + ATP = L-tryptophyl-tRNA(Trp) + AMP + diphosphate + H(+). In terms of biological role, catalyzes the attachment of tryptophan to tRNA(Trp). This is Tryptophan--tRNA ligase from Xylella fastidiosa (strain Temecula1 / ATCC 700964).